The sequence spans 302 residues: Deoxyhypusine hydroxylase (302 aa).

The residue at position 1 (Met-1) is an N-acetylmethionine. HEAT-like PBS-type repeat units lie at residues 54–80 (LKHELAYCLGQMRDARAIPVLADVLQD), 87–113 (VRHEAGEALGAIGNPEVLGLLKQYSTD), 175–201 (ERYRAMFALRNVGGKEAALALAEGLQC), 206–232 (FRHEVGYVLGQLQHEAAVPGLAATLAR), and 239–265 (VRHECAEALGAIARPACLAALREHIED). Residues His-56, His-89, and Glu-90 each coordinate Fe cation. Fe cation is bound by residues His-208, His-241, and Glu-242.

The protein belongs to the deoxyhypusine hydroxylase family. Requires Fe(2+) as cofactor.

The enzyme catalyses [eIF5A protein]-deoxyhypusine + AH2 + O2 = [eIF5A protein]-hypusine + A + H2O. It participates in protein modification; eIF5A hypusination. Catalyzes the hydroxylation of the N(6)-(4-aminobutyl)-L-lysine intermediate produced by deoxyhypusine synthase/DHPS on a critical lysine of the eukaryotic translation initiation factor 5A/eIF-5A. This is the second step of the post-translational modification of that lysine into an unusual amino acid residue named hypusine. Hypusination is unique to mature eIF-5A factor and is essential for its function. This Mus musculus (Mouse) protein is Deoxyhypusine hydroxylase.